We begin with the raw amino-acid sequence, 286 residues long: Lipoyl synthase (286 aa).

Residues C34, C39, C45, C60, C64, C67, and S271 each contribute to the [4Fe-4S] cluster site. The Radical SAM core domain occupies 46–260 (WESGTATFMI…EESAYSIGFS (215 aa)).

The protein belongs to the radical SAM superfamily. Lipoyl synthase family. Requires [4Fe-4S] cluster as cofactor.

Its subcellular location is the cytoplasm. It carries out the reaction [[Fe-S] cluster scaffold protein carrying a second [4Fe-4S](2+) cluster] + N(6)-octanoyl-L-lysyl-[protein] + 2 oxidized [2Fe-2S]-[ferredoxin] + 2 S-adenosyl-L-methionine + 4 H(+) = [[Fe-S] cluster scaffold protein] + N(6)-[(R)-dihydrolipoyl]-L-lysyl-[protein] + 4 Fe(3+) + 2 hydrogen sulfide + 2 5'-deoxyadenosine + 2 L-methionine + 2 reduced [2Fe-2S]-[ferredoxin]. The protein operates within protein modification; protein lipoylation via endogenous pathway; protein N(6)-(lipoyl)lysine from octanoyl-[acyl-carrier-protein]: step 2/2. Functionally, catalyzes the radical-mediated insertion of two sulfur atoms into the C-6 and C-8 positions of the octanoyl moiety bound to the lipoyl domains of lipoate-dependent enzymes, thereby converting the octanoylated domains into lipoylated derivatives. This chain is Lipoyl synthase, found in Picrophilus torridus (strain ATCC 700027 / DSM 9790 / JCM 10055 / NBRC 100828 / KAW 2/3).